Consider the following 2725-residue polypeptide: Teneurin-1 (2725 aa).

A disordered region spans residues 1 to 48 (MEQTDCKPYQPLPKVKHEMDLAYTSSSDESEDGRKPRQSYNSRETLHE). In terms of domain architecture, Teneurin N-terminal spans 1-318 (MEQTDCKPYQ…KPYRCCNWKC (318 aa)). Residues 1–324 (MEQTDCKPYQ…NWKCTALSAT (324 aa)) lie on the Cytoplasmic side of the membrane. A Nuclear localization signal (NLS) motif is present at residues 62–65 (RKRK). A Phosphoserine modification is found at Ser-105. Thr-109 bears the Phosphothreonine mark. A Phosphoserine modification is found at Ser-116. Residues 174–189 (AGSTQDVQSSPHNQFT) are compositionally biased toward polar residues. The segment at 174–241 (AGSTQDVQSS…PAPPTSTQDS (68 aa)) is disordered. Residues 192-201 (PLPPPPPPPH) show a composition bias toward pro residues. The Required for interaction with SORBS1 (Ten-1 ICD form) motif lies at 290-297 (PPPRPLPR). Residues 325–345 (AITVTLALLLAYVIAVHLFGL) traverse the membrane as a helical segment. Topologically, residues 346-2725 (TWQLQPVEGE…FMRQSEIGRR (2380 aa)) are extracellular. Residue Asn-433 is glycosylated (N-linked (GlcNAc...) asparagine). EGF-like domains are found at residues 528–559 (IMDD…PDCA), 560–591 (RDSC…ECDV), 592–624 (PEEQ…EICE), 625–657 (EEDC…NCET), 658–691 (PLPV…SDCS), 692–721 (TELC…GPTC), 722–753 (EERS…DHCT), and 761–796 (VRDG…TGCN). 22 disulfide bridges follow: Cys-532–Cys-542, Cys-536–Cys-547, Cys-549–Cys-558, Cys-567–Cys-578, Cys-580–Cys-589, Cys-596–Cys-607, Cys-601–Cys-612, Cys-614–Cys-623, Cys-628–Cys-639, Cys-633–Cys-644, Cys-646–Cys-655, Cys-666–Cys-679, Cys-681–Cys-690, Cys-695–Cys-705, Cys-699–Cys-710, Cys-712–Cys-721, Cys-726–Cys-736, Cys-730–Cys-741, Cys-743–Cys-752, Cys-765–Cys-775, Cys-769–Cys-784, and Cys-786–Cys-795. 2 N-linked (GlcNAc...) asparagine glycosylation sites follow: Asn-905 and Asn-1084. NHL repeat units lie at residues 1194 to 1219 (LFAP…VRRI), 1292 to 1336 (SHCG…NAVI), 1351 to 1402 (LSCD…IAGR), 1414 to 1458 (FLVS…VTTN), and 1481 to 1524 (CFSG…ISRN). A YD 1 repeat occupies 1534–1553 (YEIASPADQELYQFTVNGTH). Residues Asn-1550 and Asn-1567 are each glycosylated (N-linked (GlcNAc...) asparagine). 4 YD repeats span residues 1570–1590 (YNSE…VHIR), 1608–1632 (YWLT…ALMT), 1633–1654 (YPGN…TVYE), and 1655–1675 (YDPE…SSFH). 5 N-linked (GlcNAc...) asparagine glycosylation sites follow: Asn-1663, Asn-1699, Asn-1757, Asn-1781, and Asn-1842. 11 YD repeats span residues 1845 to 1864 (YSPS…EKME), 1865 to 1885 (YDQS…WSYT), 1886 to 1904 (YLEK…YIFE), 1905 to 1925 (YDQP…HSLQ), 1933 to 1949 (YRNI…FIQD), 1950 to 1969 (YSRD…RRVL), 1970 to 1989 (YKYT…TQVT), 1992 to 2012 (YEES…FICT), 2015 to 2035 (YRQT…EGLV), 2085 to 2105 (YDLN…FSAN), and 2113 to 2133 (YEIL…VGRM). N-linked (GlcNAc...) asparagine glycosylation occurs at Asn-2145. YD repeat units lie at residues 2153–2173 (YDAD…WRYS), 2174–2194 (YDLN…LTPL), 2196–2216 (YDLR…DEDG), 2228–2248 (YNSN…TVQY), and 2250–2270 (YDGL…LQFF). An N-linked (GlcNAc...) asparagine glycan is attached at Asn-2285. YD repeat units lie at residues 2296 to 2313 (YDLQ…GEEY) and 2314 to 2337 (YVAC…IKEI). Ser-2580 carries the phosphoserine modification. N-linked (GlcNAc...) asparagine glycosylation is present at Asn-2602.

The protein belongs to the tenascin family. Teneurin subfamily. As to quaternary structure, homodimer; disulfide-linked. Heterodimer with either TENM2 or TENM3. May also form heterodimer with TENM4. Ten-1 ICD interacts with SORBS1 (via third SH3 domain). Interacts with MBD1. Ten-1 ICD interacts with HINT1. Post-translationally, derives from the plasma membrane form by proteolytic processing. Further proteolytic cleavage may be generated. As to expression, expressed in fetal brain.

It is found in the cell membrane. Its subcellular location is the nucleus. The protein resides in the nucleus speckle. The protein localises to the nucleus matrix. It localises to the cytoplasm. It is found in the cytoskeleton. Functionally, involved in neural development, regulating the establishment of proper connectivity within the nervous system. May function as a cellular signal transducer. Plays a role in the regulation of neuroplasticity in the limbic system. Mediates a rapid reorganization of actin- and tubulin-based cytoskeleton elements with an increase in dendritic arborization and spine density formation of neurons in the hippocampus and amygdala. Induces BDNF transcription inhibition in neurons. Activates the mitogen-activated protein (MAP) kinase 2 (MEK2) and extracellular signal-regulated kinase (ERK) cascade. Also acts as a bioactive neuroprotective peptide on limbic neurons of the brain and regulates stress-induced behavior: attenuates alkalosis-associated necrotic cell death and the effects of corticotropin-releasing factor (CRF) on c-fos/FOS induction and on the reinstatement of cocaine seeking. In terms of biological role, induces gene transcription activation. In Homo sapiens (Human), this protein is Teneurin-1 (TENM1).